Here is a 507-residue protein sequence, read N- to C-terminus: Maturase K (507 aa).

This sequence belongs to the intron maturase 2 family. MatK subfamily.

The protein resides in the plastid. The protein localises to the chloroplast. Its function is as follows. Usually encoded in the trnK tRNA gene intron. Probably assists in splicing its own and other chloroplast group II introns. This chain is Maturase K, found in Ranunculus macranthus (Large buttercup).